We begin with the raw amino-acid sequence, 495 residues long: MSLVHLLLFAGLVIAASSSSPGSRLILREISDQKDKAVELNTTNFDSVLKDTPAKYAVVEFFAHWCPACRNYKPHYEKVARLFNGPDAIHPGIVLMTRVDCAMKTNTKLCDKFSVSHYPMLFWGPPTKFVSGSWEPKKDKSEILVIDDGRTAERLLNWINKQIGSSYGLDDQKFKNEHALSNLTDYNQISQAVYDVEEATAEAFDIILAHKAIKSSETSASFIRFIQLLAAHHLSRRCRKGAAEILVNYDDLCPSGNCSYEKSGGNDTLGNFPICGKDVPRGYYMFCRGSKNDTRGFSCGLWVLMHSLSVRIEDGESHFAFTTICDFVNNFFMCDECRLHFNDMCLSVKTPFKKARDFVLWVWSTHNKVNERLLKDEASLGTGDPKFPKIIWPPKELCPLCYLSSNQKSIEWDHEHVYKFLKNYYGPKLVSLYKEKSVSRSKEETVSATEDLTVATNALVVPIGAALAIAIASCAFGALACYWRTQQKNRKPRRR.

An N-terminal signal peptide occupies residues M1–A15. Positions E29–G164 constitute a Thioredoxin domain. A glycan (N-linked (GlcNAc...) asparagine) is linked at N41. Residues C66 and C69 each act as nucleophile in the active site. C66 and C69 are joined by a disulfide. N-linked (GlcNAc...) asparagine glycosylation is found at N182, N257, N266, and N292. A disulfide bridge links C287 with C299. Positions S290–W392 constitute an ERV/ALR sulfhydryl oxidase domain. FAD contacts are provided by residues R295, W302, H306, E336, H340, W363–N370, K389, and W392. A disulfide bridge links C334 with C337. A disulfide bond links C398 and C401.

FAD serves as cofactor.

The protein resides in the secreted. The enzyme catalyses 2 R'C(R)SH + O2 = R'C(R)S-S(R)CR' + H2O2. Functionally, catalyzes the oxidation of sulfhydryl groups in peptide and protein thiols to disulfides with the reduction of oxygen to hydrogen peroxide. May contribute to disulfide bond formation in a variety of secreted proteins. This Arabidopsis thaliana (Mouse-ear cress) protein is Sulfhydryl oxidase 2 (QSOX2).